The sequence spans 106 residues: NADH-quinone oxidoreductase subunit K (106 aa).

The next 3 membrane-spanning stretches (helical) occupy residues 9–29 (LGHY…GIFL), 35–55 (IVML…MVAF), and 70–90 (FILT…VIYF).

Belongs to the complex I subunit 4L family. In terms of assembly, NDH-1 is composed of 14 different subunits. Subunits NuoA, H, J, K, L, M, N constitute the membrane sector of the complex.

It localises to the cell inner membrane. It catalyses the reaction a quinone + NADH + 5 H(+)(in) = a quinol + NAD(+) + 4 H(+)(out). Its function is as follows. NDH-1 shuttles electrons from NADH, via FMN and iron-sulfur (Fe-S) centers, to quinones in the respiratory chain. The immediate electron acceptor for the enzyme in this species is believed to be ubiquinone. Couples the redox reaction to proton translocation (for every two electrons transferred, four hydrogen ions are translocated across the cytoplasmic membrane), and thus conserves the redox energy in a proton gradient. The chain is NADH-quinone oxidoreductase subunit K from Granulibacter bethesdensis (strain ATCC BAA-1260 / CGDNIH1).